We begin with the raw amino-acid sequence, 427 residues long: Putative transporter YdfJ (427 aa).

At 1 to 7 the chain is on the cytoplasmic side; sequence MDFQLYS. 2 helical membrane passes run 8 to 28 and 29 to 49; these read LGAA…AMAL and ILAM…AFIF. Over 50–74 the chain is Cytoplasmic; sequence GKMGDRIGRKKVLFITITMMGICTT. A helical membrane pass occupies residues 75–95; that stretch reads LIGVLPTYAQIGVFAPILLVT. At 96 to 97 the chain is on the periplasmic side; the sequence is LR. The chain crosses the membrane as a helical span at residues 98 to 118; sequence IIQGLGAGAEISGAGTMLAEY. Residues 119–132 are Cytoplasmic-facing; the sequence is APKGKRGIISSFVA. Residues 133-153 traverse the membrane as a helical segment; it reads MGTNCGTLSATAIWAFMFFIL. Residues 154–157 lie on the Periplasmic side of the membrane; sequence SKEE. Residues 158 to 178 traverse the membrane as a helical segment; that stretch reads LLAWGWRIPFLASVVVMVFAI. Topologically, residues 179-225 are cytoplasmic; the sequence is WLRMNLKESPVFEKVNDSNQPTAKPAPAGSMFQSKSFWLATGLRFGQ. Residues 226-246 form a helical membrane-spanning segment; the sequence is AGNSGLIQTFLAGYLVQTLLF. Over 247–251 the chain is Periplasmic; it reads NKAIP. The helical transmembrane segment at 252–272 threads the bilayer; it reads TDALMISSILGFMTIPFLGWL. Residues 273 to 279 lie on the Cytoplasmic side of the membrane; it reads SDKIGRR. A helical membrane pass occupies residues 280-300; the sequence is IPYIIMNTSAIVLAWPMLSII. Topologically, residues 301 to 307 are periplasmic; that stretch reads VDKSYAP. Residues 308–328 traverse the membrane as a helical segment; it reads STIMVALIVIHNCAVLGLFAL. The Cytoplasmic segment spans residues 329–351; it reads ENITMAEMFGCKNRFTRMAISKE. The chain crosses the membrane as a helical span at residues 352-372; it reads IGGLIASGFGPILAGIFCTMT. Residue glutamate 373 is a topological domain, periplasmic. A helical membrane pass occupies residues 374 to 394; the sequence is SWYPIAIMIMAYSVIGLISAL. At 395–427 the chain is on the cytoplasmic side; the sequence is KMPEVKDRDLSALEDAAEDQPRVVRAAQPSRSL.

This sequence belongs to the major facilitator superfamily. Metabolite:H+ Symporter (MHS) family (TC 2.A.1.6) family.

It localises to the cell inner membrane. In terms of biological role, when overexpressed in human HEK-293 cells forms an inward rectifying potassium channel. In Escherichia coli (strain K12), this protein is Putative transporter YdfJ (ydfJ).